Reading from the N-terminus, the 173-residue chain is MNPRRKSRFKLVIFVVLGIAIASGLMLYALRQNIDLFYTPSEVIQGKDNNPNQKPEVGQRIRVGGMVVEGTVVRDPKSLKVRFDLNDIGPAITVEYEGILPDLFREGQGIVAQGVLTQPTVLTATEVLAKHDENYVPPELGEKMQKVHKPMGIEAADLKGESARDRQEKEGAK.

Residues 1–8 (MNPRRKSR) are Cytoplasmic-facing. Residues 9 to 29 (FKLVIFVVLGIAIASGLMLYA) traverse the membrane as a helical; Signal-anchor for type II membrane protein segment. The Periplasmic portion of the chain corresponds to 30–173 (LRQNIDLFYT…RDRQEKEGAK (144 aa)). 2 residues coordinate heme: histidine 131 and tyrosine 135. The tract at residues 152–173 (GIEAADLKGESARDRQEKEGAK) is disordered. A compositionally biased stretch (basic and acidic residues) spans 156-173 (ADLKGESARDRQEKEGAK).

The protein belongs to the CcmE/CycJ family.

The protein localises to the cell inner membrane. In terms of biological role, heme chaperone required for the biogenesis of c-type cytochromes. Transiently binds heme delivered by CcmC and transfers the heme to apo-cytochromes in a process facilitated by CcmF and CcmH. The chain is Cytochrome c-type biogenesis protein CcmE from Haemophilus influenzae (strain ATCC 51907 / DSM 11121 / KW20 / Rd).